The primary structure comprises 142 residues: uncharacterized protein (142 aa).

The segment at 1–22 (MSGSVNQNTDQHSQDSSSTPNN) is disordered. 2 helical membrane passes run 63–83 (LFVMYMIVQVSYYIVPFVLLV) and 109–129 (IIDGIIGVLQFIFWFWIFVDL).

The protein resides in the membrane. This is an uncharacterized protein from Acanthamoeba polyphaga mimivirus (APMV).